Reading from the N-terminus, the 171-residue chain is Transcriptional repressor NrdR (171 aa).

Over residues 1–10 (MQCPHCHHNG) the composition is skewed to basic residues. The interval 1–21 (MQCPHCHHNGSRVVDSRPTDD) is disordered. A zinc finger lies at 3-34 (CPHCHHNGSRVVDSRPTDDGRVIRRRRECENC). The ATP-cone domain occupies 49-139 (LLVIKKNGAR…VYRQFKDMHV (91 aa)). Residues 152–171 (KVKLAKPSAKTTHAPKRKKD) are disordered.

The protein belongs to the NrdR family. It depends on Zn(2+) as a cofactor.

Its function is as follows. Negatively regulates transcription of bacterial ribonucleotide reductase nrd genes and operons by binding to NrdR-boxes. The protein is Transcriptional repressor NrdR of Lactiplantibacillus plantarum (strain ATCC BAA-793 / NCIMB 8826 / WCFS1) (Lactobacillus plantarum).